A 374-amino-acid chain; its full sequence is Probable neutral protease 2 homolog TRV_05367 (374 aa).

Positions methionine 1–glycine 19 are cleaved as a signal peptide. Residues phenylalanine 20–arginine 189 constitute a propeptide that is removed on maturation. Disulfide bonds link cysteine 197–cysteine 267 and cysteine 274–cysteine 292. Histidine 317 is a binding site for Zn(2+). Residue glutamate 318 is part of the active site. Zn(2+) is bound by residues histidine 321 and aspartate 332.

The protein belongs to the peptidase M35 family. Zn(2+) is required as a cofactor.

Its subcellular location is the secreted. The enzyme catalyses Preferential cleavage of bonds with hydrophobic residues in P1'. Also 3-Asn-|-Gln-4 and 8-Gly-|-Ser-9 bonds in insulin B chain.. Probable secreted metalloprotease that shows high activities on basic nuclear substrates such as histone and protamine. May be involved in virulence. In Trichophyton verrucosum (strain HKI 0517), this protein is Probable neutral protease 2 homolog TRV_05367.